We begin with the raw amino-acid sequence, 318 residues long: Glycine--tRNA ligase alpha subunit (318 aa).

The protein belongs to the class-II aminoacyl-tRNA synthetase family. Tetramer of two alpha and two beta subunits.

The protein localises to the cytoplasm. It carries out the reaction tRNA(Gly) + glycine + ATP = glycyl-tRNA(Gly) + AMP + diphosphate. This Moraxella catarrhalis (Branhamella catarrhalis) protein is Glycine--tRNA ligase alpha subunit (glyQ).